A 459-amino-acid polypeptide reads, in one-letter code: uncharacterized protein (459 aa).

The protein belongs to the Rab GDI family.

It localises to the cytoplasm. The protein localises to the nucleus. This is an uncharacterized protein from Schizosaccharomyces pombe (strain 972 / ATCC 24843) (Fission yeast).